The sequence spans 113 residues: Cell cycle protein GpsB (113 aa).

Positions 36–68 form a coiled coil; that stretch reads LDMVIKDYSTFTQEIEALQAENIRLVQELDNAP.

This sequence belongs to the GpsB family. As to quaternary structure, forms polymers through the coiled coil domains. Interacts with PBP1, MreC and EzrA.

It is found in the cytoplasm. Its function is as follows. Divisome component that associates with the complex late in its assembly, after the Z-ring is formed, and is dependent on DivIC and PBP2B for its recruitment to the divisome. Together with EzrA, is a key component of the system that regulates PBP1 localization during cell cycle progression. Its main role could be the removal of PBP1 from the cell pole after pole maturation is completed. Also contributes to the recruitment of PBP1 to the division complex. Not essential for septum formation. In Listeria innocua serovar 6a (strain ATCC BAA-680 / CLIP 11262), this protein is Cell cycle protein GpsB.